Here is an 863-residue protein sequence, read N- to C-terminus: Valine--tRNA ligase (863 aa).

Residues 43–53 (PYPTGSFHIGH) carry the 'HIGH' region motif. The short motif at 517-521 (KMSKS) is the 'KMSKS' region element. Position 520 (Lys-520) interacts with ATP.

Belongs to the class-I aminoacyl-tRNA synthetase family. ValS type 2 subfamily.

It is found in the cytoplasm. It carries out the reaction tRNA(Val) + L-valine + ATP = L-valyl-tRNA(Val) + AMP + diphosphate. Its function is as follows. Catalyzes the attachment of valine to tRNA(Val). As ValRS can inadvertently accommodate and process structurally similar amino acids such as threonine, to avoid such errors, it has a 'posttransfer' editing activity that hydrolyzes mischarged Thr-tRNA(Val) in a tRNA-dependent manner. The chain is Valine--tRNA ligase from Archaeoglobus fulgidus (strain ATCC 49558 / DSM 4304 / JCM 9628 / NBRC 100126 / VC-16).